The following is a 165-amino-acid chain: MASTIAAATKVSRKMFRELHGVVVTSGLIDKTVKVRVGGQKFNKFLQKHFDDPKQYLVHDPNNSLRAGDVVAIMPGFITSKSKRHVVKHIIAPAGTPIEERPPIPSLDELWDAKDAAKAAKKERKVLREKMQAAEEAIELAERMARHAVREIAMREKIISLQKVD.

The protein belongs to the universal ribosomal protein uS17 family. In terms of assembly, component of the mitochondrial small ribosomal subunit (mt-SSU). Mature N.crassa 74S mitochondrial ribosomes consist of a small (37S) and a large (54S) subunit. The 37S small subunit contains a 16S ribosomal RNA (16S mt-rRNA) and 32 different proteins. The 54S large subunit contains a 23S rRNA (23S mt-rRNA) and 42 different proteins. uS17m interacts with the F(1)-ATPase inhibitor IF(1) dimer.

The protein resides in the mitochondrion. In terms of biological role, component of the mitochondrial ribosome (mitoribosome), a dedicated translation machinery responsible for the synthesis of mitochondrial genome-encoded proteins, including at least some of the essential transmembrane subunits of the mitochondrial respiratory chain. The mitoribosomes are attached to the mitochondrial inner membrane and translation products are cotranslationally integrated into the membrane. The chain is Small ribosomal subunit protein uS17m (mrps17) from Neurospora crassa (strain ATCC 24698 / 74-OR23-1A / CBS 708.71 / DSM 1257 / FGSC 987).